Here is a 345-residue protein sequence, read N- to C-terminus: Phosphoribosylformylglycinamidine cyclo-ligase (345 aa).

The protein belongs to the AIR synthase family.

The protein localises to the cytoplasm. It catalyses the reaction 2-formamido-N(1)-(5-O-phospho-beta-D-ribosyl)acetamidine + ATP = 5-amino-1-(5-phospho-beta-D-ribosyl)imidazole + ADP + phosphate + H(+). The protein operates within purine metabolism; IMP biosynthesis via de novo pathway; 5-amino-1-(5-phospho-D-ribosyl)imidazole from N(2)-formyl-N(1)-(5-phospho-D-ribosyl)glycinamide: step 2/2. The chain is Phosphoribosylformylglycinamidine cyclo-ligase from Salmonella choleraesuis (strain SC-B67).